The sequence spans 171 residues: Large ribosomal subunit protein uL10 (171 aa).

This sequence belongs to the universal ribosomal protein uL10 family. Part of the ribosomal stalk of the 50S ribosomal subunit. The N-terminus interacts with L11 and the large rRNA to form the base of the stalk. The C-terminus forms an elongated spine to which L12 dimers bind in a sequential fashion forming a multimeric L10(L12)X complex.

Forms part of the ribosomal stalk, playing a central role in the interaction of the ribosome with GTP-bound translation factors. The chain is Large ribosomal subunit protein uL10 from Methylocella silvestris (strain DSM 15510 / CIP 108128 / LMG 27833 / NCIMB 13906 / BL2).